Here is a 580-residue protein sequence, read N- to C-terminus: High affinity choline transporter 1 (580 aa).

Residues 1 to 6 (MPFHVE) lie on the Extracellular side of the membrane. A helical membrane pass occupies residues 7–27 (GLVAIILFYLLIFLVGIWAAW). The Cytoplasmic portion of the chain corresponds to 28-48 (KTKNSGNAEERSEAIIVGGRD). The helical transmembrane segment at 49-69 (IGLLVGGFTMTATWVGGGYIN) threads the bilayer. Residues 70–81 (GTAEAVYGPGCG) are Extracellular-facing. Residues 82–102 (LAWAQAPIGYSLSLILGGLFF) form a helical membrane-spanning segment. Residues 103-125 (AKPMRSKGYVTMLDPFQQIYGKR) lie on the Cytoplasmic side of the membrane. Residues 126–146 (MGGLLFIPALMGEMFWAAAIF) form a helical membrane-spanning segment. At 147–164 (SALGATISVIIDVDVNIS) the chain is on the extracellular side. The helical transmembrane segment at 165–185 (VIVSALIAILYTLVGGLYSVA) threads the bilayer. The Cytoplasmic segment spans residues 186-191 (YTDVVQ). Residues 192 to 212 (LFCIFIGLWISVPFALSHPAV) form a helical membrane-spanning segment. Residues 213-237 (TDIGFTAVHAKYQSPWLGTIESVEV) lie on the Extracellular side of the membrane. Residues 238-258 (YTWLDNFLLLMLGGIPWQAYF) form a helical membrane-spanning segment. The Cytoplasmic portion of the chain corresponds to 259–274 (QRVLSSSSATYAQVLS). Residues 275-295 (FLAAFGCLVMALPAICIGAIG) traverse the membrane as a helical segment. The Extracellular segment spans residues 296–317 (ASTDWNQTAYGFPDPKTKEEAD). N-linked (GlcNAc...) asparagine glycosylation occurs at Asn-301. The helical transmembrane segment at 318–338 (MILPIVLQYLCPVYISFFGLG) threads the bilayer. Topologically, residues 339-376 (AVSAAVMSSADSSILSASSMFARNIYQLSFRQNASDKE) are cytoplasmic. The helical transmembrane segment at 377 to 397 (IVWVMRITVFVFGASATAMAL) threads the bilayer. Over 398 to 406 (LTKTVYGLW) the chain is Extracellular. Residues 407–427 (YLSSDLVYIIIFPQLLCVLFI) traverse the membrane as a helical segment. At 428–435 (KGTNTYGA) the chain is on the cytoplasmic side. Residues 436 to 456 (VAGYIFGLFLRITGGEPYLYL) traverse the membrane as a helical segment. Over 457–481 (QPLIFYPGYYPDKNGIYNQRFPFKT) the chain is Extracellular. A helical transmembrane segment spans residues 482-502 (LSMVTSFFTNICVSYLAKYLF). Residues 502-580 (FESGTLPPKL…EGSGTEDNLQ (79 aa)) form a mediates interaction with SEC14L1 region. The Cytoplasmic segment spans residues 503-580 (ESGTLPPKLD…EGSGTEDNLQ (78 aa)). The short motif at 527–532 (DKTILV) is the Dileucine-like motif element.

This sequence belongs to the sodium:solute symporter (SSF) (TC 2.A.21) family. In terms of assembly, homooligomerizes at cell surface. Interacts with SEC14L1; may regulate SLC5A7. Phosphorylated. Expressed in basal forebrain, brain stem, spinal chord, and striatum. Specific for cholinergic neurons.

It is found in the presynaptic cell membrane. The protein localises to the cell projection. Its subcellular location is the axon. The protein resides in the early endosome membrane. It localises to the cytoplasmic vesicle. It is found in the secretory vesicle. The protein localises to the synaptic vesicle membrane. It carries out the reaction choline(out) + n Na(+)(out) = choline(in) + n Na(+)(in). Its activity is regulated as follows. Choline uptake activity is regulated by SLC5A7/CHT1 internalization (inactive form) from the cell surface and recycling of internalized SLC5A7/CHT1 into the cell surface (active form). Activated by extracellular chloride ion. Specifically inhibited by nanomolar concentrations of hemicholinium 3. In terms of biological role, high-affinity Na(+)-coupled choline transmembrane symporter. Functions as an electrogenic, voltage-dependent transporter with variable charge/choline stoichiometry. Choline uptake and choline-induced current is also Cl(-)-dependent where Cl(-) is likely a regulatory ion rather than cotransported ion. Plays a critical role in acetylcholine (ACh) synthesis by taking up the substrate choline from the synaptic cleft into the presynaptic nerve terminals after neurotransmitter release. SLC5A7/CHT1-mediated choline high-affinity transport in cholinergic neurons is the rate-limiting step for production of ACh, thereby facilitating communication by subsequent action potentials. Localized predominantly in presynaptic terminal intracellular organelles, and translocated to the plasma membrane in active form in response to neuronal activity. This Rattus norvegicus (Rat) protein is High affinity choline transporter 1.